The following is a 1393-amino-acid chain: DNA-directed RNA polymerase subunit beta' (1393 aa).

4 residues coordinate Zn(2+): Cys-70, Cys-72, Cys-85, and Cys-88. Mg(2+)-binding residues include Asp-461, Asp-463, and Asp-465. Positions 815, 889, 896, and 899 each coordinate Zn(2+).

It belongs to the RNA polymerase beta' chain family. In terms of assembly, the RNAP catalytic core consists of 2 alpha, 1 beta, 1 beta' and 1 omega subunit. When a sigma factor is associated with the core the holoenzyme is formed, which can initiate transcription. Mg(2+) serves as cofactor. Zn(2+) is required as a cofactor.

The enzyme catalyses RNA(n) + a ribonucleoside 5'-triphosphate = RNA(n+1) + diphosphate. Its function is as follows. DNA-dependent RNA polymerase catalyzes the transcription of DNA into RNA using the four ribonucleoside triphosphates as substrates. The chain is DNA-directed RNA polymerase subunit beta' from Vesicomyosocius okutanii subsp. Calyptogena okutanii (strain HA).